Here is a 389-residue protein sequence, read N- to C-terminus: Protein WALLS ARE THIN 1 (389 aa).

A run of 10 helical transmembrane segments spans residues 18–38 (LQLHIAMLTLQFGYAGFHVVS), 49–69 (LVFPVYRNIIALLLLLPFAYF), 76–96 (PAITLNFLIQFFFLALIGITA), 111–131 (TFASSMQNSVPAITFLMAALL), 143–163 (GISKILGTALCVAGASVITLY), 198–218 (WTLGCIYLIGHCLSWSGWLVF), 230–250 (LSVTSYTCFFGIIQFLIIAAF), 266–286 (LFTILYAGIVASGIAFAVQIW), 294–314 (VFVAVYQPVQTLVVAIMASIA), and 319–339 (FYLGGIIGAVLIIAGLYFVLY). 2 consecutive EamA domains span residues 32–161 (AGFH…SVIT) and 210–339 (LSWS…FVLY). Ser372 carries the phosphoserine modification.

The protein belongs to the drug/metabolite transporter (DMT) superfamily. Plant drug/metabolite exporter (P-DME) (TC 2.A.7.4) family. In terms of tissue distribution, mostly expressed in stems and hypocotyls, also present in seedlings, root, leaves, flowers and siliques. Ubiquitous, mostly expressed in vascular tissues and secondary wall-forming cells, including developing xylem vessels and fibers.

The protein resides in the vacuole membrane. Its function is as follows. Required for secondary wall formation in fibers, especially in short days conditions. Promotes indole metabolism and transport (e.g. tryptophan, neoglucobrassicin and auxin (indole-3-acetic acid)). May prevent salicylic-acid (SA) accumulation. This is Protein WALLS ARE THIN 1 (WAT1) from Arabidopsis thaliana (Mouse-ear cress).